The chain runs to 247 residues: Uridylate kinase (247 aa).

Position 19 to 22 (19 to 22) interacts with ATP; the sequence is KISG. Gly-61 serves as a coordination point for UMP. ATP is bound by residues Gly-62 and Arg-66. UMP is bound by residues Asp-81 and 142–149; that span reads TGNPFFTT. The ATP site is built by Thr-169, Gln-170, Tyr-175, and Asp-178.

Belongs to the UMP kinase family. Homohexamer.

It is found in the cytoplasm. It catalyses the reaction UMP + ATP = UDP + ADP. The protein operates within pyrimidine metabolism; CTP biosynthesis via de novo pathway; UDP from UMP (UMPK route): step 1/1. With respect to regulation, inhibited by UTP. In terms of biological role, catalyzes the reversible phosphorylation of UMP to UDP. The sequence is that of Uridylate kinase from Wolbachia pipientis wMel.